Consider the following 134-residue polypeptide: Protein NrdI (134 aa).

It belongs to the NrdI family.

Its function is as follows. Probably involved in ribonucleotide reductase function. The sequence is that of Protein NrdI from Serratia proteamaculans (strain 568).